Consider the following 333-residue polypeptide: Autoinducer 2 import system permease protein LsrD (333 aa).

10 consecutive transmembrane segments (helical) span residues 7 to 27, 45 to 65, 67 to 87, 90 to 110, 118 to 138, 162 to 182, 212 to 232, 240 to 260, 261 to 281, and 288 to 308; these read YGWELTLAALLVLEILLFGLS, ICIGIVALPLTMVIVSGGIDI, FGSTIGLCAIFLGIVFQAGVP, VAIPLTVLVGALCGLINAGLI, LVITLGTLYLFGGSALLLSGL, LFGLPIPLVIFMLCVLLFWLL, TLCMLYAMTGVASAISAILLV, SDLGASFLMPAITAVVLGGAN, IYGGSGSILGTALAVLLVGYL, and IGTPNQISSALSGALLILVVV.

Belongs to the binding-protein-dependent transport system permease family. AraH/RbsC subfamily. As to quaternary structure, the complex is composed of two ATP-binding proteins (LsrA), two transmembrane proteins (LsrC and LsrD) and a solute-binding protein (LsrB).

It localises to the cell inner membrane. Functionally, part of the ABC transporter complex LsrABCD involved in autoinducer 2 (AI-2) import. Probably responsible for the translocation of the substrate across the membrane. This chain is Autoinducer 2 import system permease protein LsrD (lsrD), found in Yersinia pestis bv. Antiqua (strain Antiqua).